A 448-amino-acid polypeptide reads, in one-letter code: Ribosome biogenesis protein YTM1 (448 aa).

A ubiquitin-like (UBL) domain region spans residues 5-86 (TSNQAVVFST…EETLEIEYIE (82 aa)). 6 WD repeats span residues 98–136 (PHES…TLDA), 191–230 (LHTA…KHEV), 271–309 (SHIG…CTRT), 312–351 (ASEK…ALSA), 357–397 (LHPA…AAIS), and 403–439 (DGTK…ETQG). The disordered stretch occupies residues 225 to 261 (PPKHEVPEPTITAADQRTKKRRKVDPSSGDSSSPTAI).

It belongs to the WD repeat WDR12/YTM1 family. As to quaternary structure, component of the NOP7 complex, composed of ERB1, NOP7 and YTM1. The complex is held together by ERB1, which interacts with NOP7 via its N-terminal domain and with YTM1 via a high-affinity interaction between the seven-bladed beta-propeller domains of the 2 proteins. The NOP7 complex associates with the 66S pre-ribosome. Interacts (via UBL domain) with MDN1 (via VWFA/MIDAS domain).

Its subcellular location is the nucleus. It localises to the nucleolus. The protein localises to the nucleoplasm. In terms of biological role, component of the NOP7 complex, which is required for maturation of the 25S and 5.8S ribosomal RNAs and formation of the 60S ribosome. The protein is Ribosome biogenesis protein YTM1 of Coprinopsis cinerea (strain Okayama-7 / 130 / ATCC MYA-4618 / FGSC 9003) (Inky cap fungus).